A 1091-amino-acid chain; its full sequence is ATP-citrate synthase (1091 aa).

The 262-residue stretch at 4–265 folds into the ATP-grasp domain; sequence KAISEQTGKE…LDAKSGASLK (262 aa). 6 residues coordinate ATP: lysine 58, arginine 66, glycine 67, proline 109, valine 111, and glutamate 118. Position 131 is a phosphotyrosine (tyrosine 131). Aspartate 216 contributes to the ATP binding site. Mg(2+)-binding residues include aspartate 257, serine 260, and alanine 262. Serine 263 is subject to Phosphoserine. Citrate-binding residues include glycine 309, asparagine 346, threonine 348, tyrosine 364, and arginine 379. Over residues 442–457 the composition is skewed to low complexity; it reads SGSTSTPAPSRTASFS. The tract at residues 442–471 is disordered; that stretch reads SGSTSTPAPSRTASFSESRTDEVAPAKKAK. Threonine 447 is modified (phosphothreonine). Serine 451 is subject to Phosphoserine. A Phosphoserine; by PKA and PKB/AKT1 or PKB/AKT2 or BCKDK modification is found at serine 455. Phosphoserine is present on serine 459. N6-acetyllysine; alternate is present on residues lysine 530, lysine 536, and lysine 544. Residues lysine 530, lysine 536, and lysine 544 each participate in a glycyl lysine isopeptide (Lys-Gly) (interchain with G-Cter in ubiquitin); alternate cross-link. Position 629 is a phosphothreonine (threonine 629). The residue at position 653 (serine 653) is a Phosphoserine. The residue at position 672 (tyrosine 672) is a Phosphotyrosine. Catalysis depends on histidine 750, which acts as the Tele-phosphohistidine intermediate. 769–779 serves as a coordination point for CoA; it reads LKEAGVFVPRS. Serine 829 carries the post-translational modification Phosphoserine. 4 positions are modified to N6-acetyllysine: lysine 938, lysine 958, lysine 968, and lysine 1067. Serine 1090 bears the Phosphoserine mark.

The protein in the N-terminal section; belongs to the succinate/malate CoA ligase beta subunit family. It in the C-terminal section; belongs to the succinate/malate CoA ligase alpha subunit family. As to quaternary structure, homotetramer. The cofactor is Mg(2+). Phosphorylated by PKA and GSK3 in a sequential manner; phosphorylation results in activation of its activity. Phosphorylation on Thr-447 and Ser-451 depends on the phosphorylation state of Ser-455. Phosphorylation on Ser-455 is decreased by prior phosphorylation on the other 2 residues. Phosphorylated at Ser-455 by BCKDK and dephosphorylated by protein phosphatase PPM1K. Post-translationally, ISGylated. In terms of processing, acetylated at Lys-530, Lys-536 and Lys-544 by KAT2B/PCAF. Acetylation is promoted by glucose and stabilizes the protein, probably by preventing ubiquitination at the same sites. Acetylation promotes de novo lipid synthesis. Deacetylated by SIRT2. Ubiquitinated at Lys-530, Lys-536 and Lys-544 by the BCR(KLHL25) E3 ubiquitin ligase complex and UBR4, leading to its degradation. Ubiquitination is probably inhibited by acetylation at same site. BCR(KLHL25)-mediated degradation of ACLY promotes fatty acid oxidation and is required for differentiation of inducible regulatory T (iTreg) cells.

It is found in the cytoplasm. The protein resides in the cytosol. It catalyses the reaction oxaloacetate + acetyl-CoA + ADP + phosphate = citrate + ATP + CoA. With respect to regulation, phosphorylation results in activation of its activity. Glucose 6-phosphate, fructose 6-phosphate, fructose 2,6-bisphosphate, ribulose 5-phosphate, and fructose 1,6-bisphosphate also act as activators. Catalyzes the cleavage of citrate into oxaloacetate and acetyl-CoA, the latter serving as common substrate in multiple biochemical reactions in protein, carbohydrate and lipid metabolism. In Bos taurus (Bovine), this protein is ATP-citrate synthase (ACLY).